Reading from the N-terminus, the 791-residue chain is 1-phosphatidylinositol 4,5-bisphosphate phosphodiesterase delta-4 (791 aa).

The 109-residue stretch at 16 to 124 (LLMQKGTMMR…WMQGLQLLVG (109 aa)) folds into the PH domain. A substrate binding region spans residues 26–53 (KVRSKSWKKLRFFRLQDDGMTVWHARQA). EF-hand domains lie at 134 to 169 (RLDQ…MNVE), 170 to 205 (MDQE…LTQR), and 207 to 237 (EVQE…EQKE). Ca(2+) is bound by residues D147, N149, D151, R153, E158, D183, S185, S187, T189, and E194. The GBA signature appears at 213 to 243 (EKFSSDGQKLTLLEFVDFLQEEQKEGERASD). One can recognise a PI-PLC X-box domain in the interval 290–435 (QDMTQPLNHY…LRGKILVKGK (146 aa)). H305 is a catalytic residue. Ca(2+) contacts are provided by N306, E335, and D337. H350 is an active-site residue. Residue E384 participates in Ca(2+) binding. Residues K433, K435, S551, and R578 each coordinate substrate. Residues 522-638 (LSALVVYLKA…GYVLKPDFLR (117 aa)) form the PI-PLC Y-box domain. The 128-residue stretch at 638-765 (RDAQSSFHPE…QGYRHIHLLS (128 aa)) folds into the C2 domain. 6 residues coordinate Ca(2+): I679, D681, N705, D734, Y735, and D736. A PDZ-binding motif is present at residues 760–763 (HIHL).

Interacts with GRIP1. Interacts (via GBA motif) with guanine nucleotide-binding protein G(i) alpha subunit GNAI3 (inactive GDP-bound form); low-affinity interaction. Requires Ca(2+) as cofactor.

It is found in the membrane. The protein localises to the nucleus. Its subcellular location is the cytoplasm. It localises to the endoplasmic reticulum. It carries out the reaction a 1,2-diacyl-sn-glycero-3-phospho-(1D-myo-inositol-4,5-bisphosphate) + H2O = 1D-myo-inositol 1,4,5-trisphosphate + a 1,2-diacyl-sn-glycerol + H(+). The enzyme catalyses a 1,2-diacyl-sn-glycero-3-phospho-(1D-myo-inositol) + H2O = 1D-myo-inositol 1-phosphate + a 1,2-diacyl-sn-glycerol + H(+). In terms of biological role, hydrolyzes the phosphatidylinositol 4,5-bisphosphate (PIP2) to generate 2 second messenger molecules diacylglycerol (DAG) and inositol 1,4,5-trisphosphate (IP3). DAG mediates the activation of protein kinase C (PKC), while IP3 releases Ca(2+) from intracellular stores. Required for acrosome reaction in sperm during fertilization, probably by acting as an important enzyme for intracellular Ca(2+) mobilization in the zona pellucida-induced acrosome reaction. May play a role in cell growth. Modulates the liver regeneration in cooperation with nuclear PKC. Overexpression up-regulates the Erk signaling pathway and proliferation. This Bos taurus (Bovine) protein is 1-phosphatidylinositol 4,5-bisphosphate phosphodiesterase delta-4 (PLCD4).